The chain runs to 202 residues: Small ribosomal subunit protein uS4 (202 aa).

The region spanning 93-156 (RRLDNMVYRL…KDLKIISEAV (64 aa)) is the S4 RNA-binding domain.

This sequence belongs to the universal ribosomal protein uS4 family. Part of the 30S ribosomal subunit. Contacts protein S5. The interaction surface between S4 and S5 is involved in control of translational fidelity.

Functionally, one of the primary rRNA binding proteins, it binds directly to 16S rRNA where it nucleates assembly of the body of the 30S subunit. Its function is as follows. With S5 and S12 plays an important role in translational accuracy. This is Small ribosomal subunit protein uS4 from Pediococcus pentosaceus (strain ATCC 25745 / CCUG 21536 / LMG 10740 / 183-1w).